The primary structure comprises 183 residues: MSQPAKVLLLYAHPESQDSVANRVLLKPAIQHNNVTVHDLYARYPDFFIDTPYEQALLREHDVIVFQHPLYTYSCPALLKEWLDRVLSRGFASGPGGNQLVGKYWRSVITTGEPESAYRYDALNRYPMSDVLRPFELTAAMCRMHWMPPIIVYWARRQSPQTLASHAKAYGEWLANPVSAGGY.

This sequence belongs to the NAD(P)H dehydrogenase (quinone) family. KefG subfamily. Interacts with KefB.

Its subcellular location is the cell inner membrane. It catalyses the reaction a quinone + NADH + H(+) = a quinol + NAD(+). It carries out the reaction a quinone + NADPH + H(+) = a quinol + NADP(+). Functionally, regulatory subunit of a potassium efflux system that confers protection against electrophiles. Required for full activity of KefB. The polypeptide is Glutathione-regulated potassium-efflux system ancillary protein KefG (Salmonella enteritidis PT4 (strain P125109)).